The primary structure comprises 352 residues: Holliday junction branch migration complex subunit RuvB (352 aa).

Residues 5 to 191 (TDDFSEQRVI…FGIVARLEFY (187 aa)) are large ATPase domain (RuvB-L). Residues leucine 30, arginine 31, glycine 72, lysine 75, threonine 76, threonine 77, 138 to 140 (EDY), arginine 181, tyrosine 191, and arginine 228 each bind ATP. Threonine 76 serves as a coordination point for Mg(2+). Positions 192-262 (TPLELTRIVT…MADAALVMLD (71 aa)) are small ATPAse domain (RuvB-S). The tract at residues 265–352 (PVGFDVMDRK…GPNGELWGGQ (88 aa)) is head domain (RuvB-H). Residues arginine 301, arginine 320, and arginine 325 each contribute to the DNA site.

This sequence belongs to the RuvB family. In terms of assembly, homohexamer. Forms an RuvA(8)-RuvB(12)-Holliday junction (HJ) complex. HJ DNA is sandwiched between 2 RuvA tetramers; dsDNA enters through RuvA and exits via RuvB. An RuvB hexamer assembles on each DNA strand where it exits the tetramer. Each RuvB hexamer is contacted by two RuvA subunits (via domain III) on 2 adjacent RuvB subunits; this complex drives branch migration. In the full resolvosome a probable DNA-RuvA(4)-RuvB(12)-RuvC(2) complex forms which resolves the HJ.

The protein resides in the cytoplasm. The catalysed reaction is ATP + H2O = ADP + phosphate + H(+). The RuvA-RuvB-RuvC complex processes Holliday junction (HJ) DNA during genetic recombination and DNA repair, while the RuvA-RuvB complex plays an important role in the rescue of blocked DNA replication forks via replication fork reversal (RFR). RuvA specifically binds to HJ cruciform DNA, conferring on it an open structure. The RuvB hexamer acts as an ATP-dependent pump, pulling dsDNA into and through the RuvAB complex. RuvB forms 2 homohexamers on either side of HJ DNA bound by 1 or 2 RuvA tetramers; 4 subunits per hexamer contact DNA at a time. Coordinated motions by a converter formed by DNA-disengaged RuvB subunits stimulates ATP hydrolysis and nucleotide exchange. Immobilization of the converter enables RuvB to convert the ATP-contained energy into a lever motion, pulling 2 nucleotides of DNA out of the RuvA tetramer per ATP hydrolyzed, thus driving DNA branch migration. The RuvB motors rotate together with the DNA substrate, which together with the progressing nucleotide cycle form the mechanistic basis for DNA recombination by continuous HJ branch migration. Branch migration allows RuvC to scan DNA until it finds its consensus sequence, where it cleaves and resolves cruciform DNA. This is Holliday junction branch migration complex subunit RuvB from Herminiimonas arsenicoxydans.